The primary structure comprises 436 residues: ATP-dependent protease ATPase subunit HslU (436 aa).

ATP is bound by residues Ile-18, 60-65 (GVGKTE), Asp-250, Glu-314, and Arg-386.

This sequence belongs to the ClpX chaperone family. HslU subfamily. In terms of assembly, a double ring-shaped homohexamer of HslV is capped on each side by a ring-shaped HslU homohexamer. The assembly of the HslU/HslV complex is dependent on binding of ATP.

Its subcellular location is the cytoplasm. Functionally, ATPase subunit of a proteasome-like degradation complex; this subunit has chaperone activity. The binding of ATP and its subsequent hydrolysis by HslU are essential for unfolding of protein substrates subsequently hydrolyzed by HslV. HslU recognizes the N-terminal part of its protein substrates and unfolds these before they are guided to HslV for hydrolysis. This is ATP-dependent protease ATPase subunit HslU from Mesorhizobium japonicum (strain LMG 29417 / CECT 9101 / MAFF 303099) (Mesorhizobium loti (strain MAFF 303099)).